A 218-amino-acid polypeptide reads, in one-letter code: Cytidylate kinase (218 aa).

ATP is bound at residue 11-19; the sequence is GPGASGKGT.

The protein belongs to the cytidylate kinase family. Type 1 subfamily.

It localises to the cytoplasm. The catalysed reaction is CMP + ATP = CDP + ADP. It catalyses the reaction dCMP + ATP = dCDP + ADP. This Neisseria meningitidis serogroup B (strain ATCC BAA-335 / MC58) protein is Cytidylate kinase.